Consider the following 128-residue polypeptide: Large ribosomal subunit protein bL17 (128 aa).

Belongs to the bacterial ribosomal protein bL17 family. In terms of assembly, part of the 50S ribosomal subunit. Contacts protein L32.

This is Large ribosomal subunit protein bL17 from Streptococcus thermophilus (strain ATCC BAA-250 / LMG 18311).